The sequence spans 74 residues: UPF0352 protein PM1884 (74 aa).

It belongs to the UPF0352 family.

The protein is UPF0352 protein PM1884 of Pasteurella multocida (strain Pm70).